The primary structure comprises 449 residues: Phosphomannomutase (449 aa).

Ser-97 acts as the Phosphoserine intermediate in catalysis. Mg(2+) is bound by residues Ser-97, Asp-237, Asp-239, and Asp-241.

The protein belongs to the phosphohexose mutase family. Mg(2+) serves as cofactor.

It carries out the reaction alpha-D-mannose 1-phosphate = D-mannose 6-phosphate. It participates in amino-acid biosynthesis. Functionally, catalyzes the formation of mannose-1-P from mannose-6-P. Can also use glucose-6-P. This is Phosphomannomutase (manB) from Methanocaldococcus jannaschii (strain ATCC 43067 / DSM 2661 / JAL-1 / JCM 10045 / NBRC 100440) (Methanococcus jannaschii).